A 327-amino-acid chain; its full sequence is Cobalamin biosynthesis protein CobD (327 aa).

Transmembrane regions (helical) follow at residues 60-80 (GMWL…VLEL), 82-102 (LPFA…VLLA), 159-179 (DGIV…LFAY), and 304-324 (LFWS…LIGL).

Belongs to the CobD/CbiB family.

The protein localises to the cell membrane. The protein operates within cofactor biosynthesis; adenosylcobalamin biosynthesis. In terms of biological role, converts cobyric acid to cobinamide by the addition of aminopropanol on the F carboxylic group. The sequence is that of Cobalamin biosynthesis protein CobD from Brucella anthropi (strain ATCC 49188 / DSM 6882 / CCUG 24695 / JCM 21032 / LMG 3331 / NBRC 15819 / NCTC 12168 / Alc 37) (Ochrobactrum anthropi).